A 1235-amino-acid chain; its full sequence is N-acetylglucosamine-1-phosphotransferase subunits alpha/beta (1235 aa).

Residues 22–42 form a helical membrane-spanning segment; it reads VCFVGVVVTIVSAFQFGEVVL. Residues N83, N114, N148, and N179 are each glycosylated (N-linked (GlcNAc...) asparagine). 4 disulfide bridges follow: C438–C461, C452–C468, C505–C528, and C519–C535. LNR repeat units lie at residues 438–473 and 505–545; these read CAEGCPGSWIKDGYCDKACNNSACDWDGGDCSGNTA and CNQG…ELYK. Ca(2+) contacts are provided by D449, D464, D467, D516, D531, and D534. N614 and N729 each carry an N-linked (GlcNAc...) asparagine glycan. One can recognise a DMAP1-binding domain in the interval 699–823; the sequence is NISLLPKEAQ…AQPTLGVTVS (125 aa). 2 disordered regions span residues 751-783 and 830-850; these read QARTDETKGNLEVPQENPSHRRPHGFAGEHRSE and LIVPPESHLPKEEESDRAEGN. Basic and acidic residues predominate over residues 837–848; that stretch reads HLPKEEESDRAE. In terms of domain architecture, EF-hand spans 984 to 1019; the sequence is VQPLNISQVFHEVDTDQSGVLSDREIRTLATRIHDL. N988 carries N-linked (GlcNAc...) asparagine glycosylation. The Ca(2+) site is built by D997, D999, S1001, and E1008. N1108 is a glycosylation site (N-linked (GlcNAc...) asparagine). Residues 1194–1214 traverse the membrane as a helical segment; the sequence is VLATLIIFTIFSFFAEQIIAL.

This sequence belongs to the stealth family. As to quaternary structure, hexamer of two alpha, two beta and two gamma (GNPTG) subunits; disulfide-linked. The alpha and/or the beta subunits of the enzyme constitute the catalytic subunits. Interacts with LYSET; facilitates proper localization of GNPTAB. The alpha- and beta-subunits are generated by a proteolytic cleavage by MBTPS1 protease at the Lys-907-Asp-908 bond.

It localises to the golgi apparatus membrane. It carries out the reaction N(4)-[alpha-D-mannosyl-(1-&gt;2)-alpha-D-mannosyl-(glycan)]-L-asparaginyl-[protein] + UDP-N-acetyl-alpha-D-glucosamine = N(4)-[6-(N-acetyl-alpha-D-glucosaminyl-1-phospho)-alpha-D-mannosyl-(1-&gt;2)-alpha-D-mannosyl-(glycan)]-L-asparaginyl-[protein] + UMP + H(+). In terms of biological role, catalyzes the formation of mannose 6-phosphate (M6P) markers on high mannose type oligosaccharides in the Golgi apparatus. M6P residues are required to bind to the M6P receptors (MPR), which mediate the vesicular transport of lysosomal enzymes to the endosomal/prelysosomal compartment. This Mus musculus (Mouse) protein is N-acetylglucosamine-1-phosphotransferase subunits alpha/beta (Gnptab).